A 621-amino-acid chain; its full sequence is Transmembrane protein 200C (621 aa).

The segment at 12-37 (ARKQDPLRPPSQIPKRKRKAKKRRKN) is disordered. Over residues 25 to 36 (PKRKRKAKKRRK) the composition is skewed to basic residues. A helical membrane pass occupies residues 53-73 (GLIALCGILVLLVGIAMAVVG). A disordered region spans residues 80 to 147 (GTNREGGKQL…RAASPSSSST (68 aa)). Residues 125–147 (SSSAGAPRSTPPARAASPSSSST) show a composition bias toward low complexity. Residues 167 to 187 (VFGPLIMGIGIFLFICANAVL) form a helical membrane-spanning segment. Disordered stretches follow at residues 284–315 (WPPH…PREP), 347–368 (ASSC…QSTA), and 384–598 (LQGG…FTNK). A compositionally biased stretch (low complexity) spans 290-303 (APSGGRPRGAASPP). Over residues 405–418 (PGERGSQEIPRGEL) the composition is skewed to basic and acidic residues. Residues 479–490 (RAPPSPEPPPSP) show a composition bias toward pro residues. Low complexity-rich tracts occupy residues 491-505 (GSAD…KAAS) and 523-533 (GSSQSDDPSSS). Residues 586–595 (EQPQPVQRQF) show a composition bias toward polar residues.

The protein belongs to the TMEM200 family.

The protein localises to the membrane. In Homo sapiens (Human), this protein is Transmembrane protein 200C (TMEM200C).